We begin with the raw amino-acid sequence, 141 residues long: Putative antiporter subunit mnhB2 (141 aa).

Transmembrane regions (helical) follow at residues 10–30 (TVTK…FFAG), 35–55 (GGGF…FLAF), 70–90 (ILMI…TFFG), and 114–134 (ITLF…TVML).

The protein belongs to the CPA3 antiporters (TC 2.A.63) subunit B family. In terms of assembly, may form a heterooligomeric complex that consists of seven subunits: mnhA2, mnhB2, mnhC2, mnhD2, mnhE2, mnhF2 and mnhG2.

Its subcellular location is the cell membrane. This chain is Putative antiporter subunit mnhB2 (mnhB2), found in Staphylococcus aureus (strain MRSA252).